The primary structure comprises 542 residues: MSFRFNKGAFEDNSFNEQIREALTSALNSKTQSSSQTAPANTTNSAATDEVKQETRGPKRLDILKSGISVSKVNFPSTPQLEILDLDVSAQSRSLLKGICKVSCKNAMLEINTEIEANLLLLYTNDGPSFTTPRLISNDSFTVPITMTFNQIELEAITNIFVKNNSVGISFNDVNLDFDFDCSIKLLQSSIEKRLKGSMETVFKEVLPSVIFSMSQRWFTHGESTCNSASDDKSAGRQVENHSHTPRTILEDCDLEDLSPANMLRLSTLVSSRQSLSLNPTAMNTLSTIPGCLERQNLHRFNSRIPALSNFYPDFYEVESPHLKAFGRSVSTNVISSGKLEHHNALPQRVLDERSYDLKTIASVQSRIFERSSGDGTAIRRRKIKMGKKSKSKKAQSQDIENSSPTVVMPSSPSLEPSAVSTPEALHSPQPTTAVQSPELLAENSESVSIPALILPTQADHYTLPVKTSAPKLNLLEEAHYLNRKREFQKLRTSLYSPIRSNRFNLNKEMERPILEHKGLNFVGLTHGLNWGSEDLPPPYRG.

The 216-residue stretch at 1 to 216 (MSFRFNKGAF…LPSVIFSMSQ (216 aa)) folds into the SMP-LTD domain. Disordered stretches follow at residues 27-58 (LNSK…TRGP) and 372-435 (SSGD…TTAV). The span at 31–48 (TQSSSQTAPANTTNSAAT) shows a compositional bias: low complexity. Positions 49-58 (DEVKQETRGP) are enriched in basic and acidic residues. The span at 379-394 (IRRRKIKMGKKSKSKK) shows a compositional bias: basic residues. The span at 403–414 (SSPTVVMPSSPS) shows a compositional bias: low complexity.

Belongs to the MDM34 family. As to quaternary structure, component of the ER-mitochondria encounter structure (ERMES) or MDM complex, composed of MMM1, MDM10, MDM12 and MDM34.

Its subcellular location is the mitochondrion outer membrane. Functionally, component of the ERMES/MDM complex, which serves as a molecular tether to connect the endoplasmic reticulum (ER) and mitochondria. Components of this complex are involved in the control of mitochondrial shape and protein biogenesis, and function in nonvesicular lipid trafficking between the ER and mitochondria. MDM34 is required for the interaction of the ER-resident membrane protein MMM1 and the outer mitochondrial membrane-resident beta-barrel protein MDM10. The polypeptide is Mitochondrial distribution and morphology protein 34 (Lachancea thermotolerans (strain ATCC 56472 / CBS 6340 / NRRL Y-8284) (Yeast)).